Reading from the N-terminus, the 223-residue chain is Flagellar L-ring protein (223 aa).

Residues 1-18 (MKKSLMALIVVGSFLLSA) form the signal peptide. C19 carries N-palmitoyl cysteine lipidation. C19 carries S-diacylglycerol cysteine lipidation.

It belongs to the FlgH family. The basal body constitutes a major portion of the flagellar organelle and consists of four rings (L,P,S, and M) mounted on a central rod.

The protein resides in the cell outer membrane. It localises to the bacterial flagellum basal body. Its function is as follows. Assembles around the rod to form the L-ring and probably protects the motor/basal body from shearing forces during rotation. The sequence is that of Flagellar L-ring protein from Herminiimonas arsenicoxydans.